Reading from the N-terminus, the 397-residue chain is Probable N-succinyldiaminopimelate aminotransferase DapC (397 aa).

Pyridoxal 5'-phosphate is bound by residues 109–110 and 218–222; these read GS and DGMAE. Lysine 232 bears the N6-(pyridoxal phosphate)lysine mark.

It belongs to the class-III pyridoxal-phosphate-dependent aminotransferase family. As to quaternary structure, homodimer. Pyridoxal 5'-phosphate is required as a cofactor.

The protein localises to the cytoplasm. The catalysed reaction is N-succinyl-(2S,6S)-2,6-diaminopimelate + 2-oxoglutarate = (S)-2-succinylamino-6-oxoheptanedioate + L-glutamate. The protein operates within amino-acid biosynthesis; L-lysine biosynthesis via DAP pathway; LL-2,6-diaminopimelate from (S)-tetrahydrodipicolinate (succinylase route): step 2/3. Involved in the lysine biosynthetic pathways. It catalyzes the transfer of an amino group from L-glutamate to N-succinyl-2-l-amino-6-oxoheptanedioate (N-succinyl-2-l-amino-6-ketopimelate) in a PLP-dependent reaction, yielding as products N-succinyl-l-2,6-diaminoheptanedioate (N-succinyl-diaminopimelate) and 2-oxoglutarate. This chain is Probable N-succinyldiaminopimelate aminotransferase DapC (dapC), found in Mycobacterium tuberculosis (strain CDC 1551 / Oshkosh).